The chain runs to 255 residues: Pyrroloquinoline-quinone synthase (255 aa).

Belongs to the PqqC family.

It catalyses the reaction 6-(2-amino-2-carboxyethyl)-7,8-dioxo-1,2,3,4,7,8-hexahydroquinoline-2,4-dicarboxylate + 3 O2 = pyrroloquinoline quinone + 2 H2O2 + 2 H2O + H(+). It functions in the pathway cofactor biosynthesis; pyrroloquinoline quinone biosynthesis. In terms of biological role, ring cyclization and eight-electron oxidation of 3a-(2-amino-2-carboxyethyl)-4,5-dioxo-4,5,6,7,8,9-hexahydroquinoline-7,9-dicarboxylic-acid to PQQ. The chain is Pyrroloquinoline-quinone synthase from Cereibacter sphaeroides (strain ATCC 17023 / DSM 158 / JCM 6121 / CCUG 31486 / LMG 2827 / NBRC 12203 / NCIMB 8253 / ATH 2.4.1.) (Rhodobacter sphaeroides).